The following is a 229-amino-acid chain: Glutathione S-transferase 1 (229 aa).

Residues 2 to 86 (AQFTLWSHAH…YLADKYDTER (85 aa)) enclose the GST N-terminal domain. One can recognise a GST C-terminal domain in the interval 93–229 (DHPEYYKVIQ…FEERSKALDN (137 aa)).

It belongs to the GST superfamily.

The enzyme catalyses RX + glutathione = an S-substituted glutathione + a halide anion + H(+). Functionally, involved in the oxidative stress response and detoxification. The chain is Glutathione S-transferase 1 (gst1) from Schizosaccharomyces pombe (strain 972 / ATCC 24843) (Fission yeast).